Consider the following 158-residue polypeptide: NAD(P)H-quinone oxidoreductase subunit J, chloroplastic (158 aa).

Belongs to the complex I 30 kDa subunit family. As to quaternary structure, NDH is composed of at least 16 different subunits, 5 of which are encoded in the nucleus.

It is found in the plastid. It localises to the chloroplast thylakoid membrane. It carries out the reaction a plastoquinone + NADH + (n+1) H(+)(in) = a plastoquinol + NAD(+) + n H(+)(out). The enzyme catalyses a plastoquinone + NADPH + (n+1) H(+)(in) = a plastoquinol + NADP(+) + n H(+)(out). In terms of biological role, NDH shuttles electrons from NAD(P)H:plastoquinone, via FMN and iron-sulfur (Fe-S) centers, to quinones in the photosynthetic chain and possibly in a chloroplast respiratory chain. The immediate electron acceptor for the enzyme in this species is believed to be plastoquinone. Couples the redox reaction to proton translocation, and thus conserves the redox energy in a proton gradient. The polypeptide is NAD(P)H-quinone oxidoreductase subunit J, chloroplastic (Aethionema grandiflorum (Persian stone-cress)).